The primary structure comprises 557 residues: Hyaluronan synthase 3 (557 aa).

Topologically, residues 1-10 are cytoplasmic; the sequence is MPGKFQTGLR. Residues 11–31 form a helical membrane-spanning segment; it reads VLATCLFALLVLGGILVAYVT. The Extracellular portion of the chain corresponds to 32–44; the sequence is GYQFIHTDRHHLS. The chain crosses the membrane as a helical span at residues 45–65; that stretch reads FGLYGAILGLHLLSQSLFAFL. The Cytoplasmic segment spans residues 66–367; that stretch reads EHRKMRGGGR…NALWFHKHHL (302 aa). Residues 368–388 traverse the membrane as a helical segment; it reads WMTYESVVTGFFPFFLVATVV. Topologically, residues 389–398 are extracellular; that stretch reads QLFYRGRVWN. The chain crosses the membrane as a helical span at residues 399 to 419; that stretch reads ILLFLLTVQLVGILKATYACI. The Cytoplasmic portion of the chain corresponds to 420–430; sequence LRGNAEMIFMS. Residues 431–451 form a helical membrane-spanning segment; the sequence is LYSLLYMTSLLPAKIFAVITI. Topologically, residues 452–463 are extracellular; it reads KKSGWGTSGRRK. Residues 464-484 form a helical membrane-spanning segment; sequence LVVNFMGMVPVSVWFCILLGG. Residues 485-501 lie on the Cytoplasmic side of the membrane; it reads LVYTAYCQSHDPFTETE. Residues 502 to 522 form a helical membrane-spanning segment; it reads LLFLLTGAILYGCYWVALLSL. Over 523 to 557 the chain is Extracellular; the sequence is YLALIARRCGKRQELYNLALEEVSEPEPAAKAIKP.

It belongs to the NodC/HAS family. Requires Mg(2+) as cofactor. Post-translationally, O-GlcNAcylation increases the hyaluronan synthase activity, HAS3 stability and its plasma membrane residence. The concentration of UDP-GlcNAc controls the level of O-GlcNAc modification.

It is found in the cell membrane. The protein resides in the golgi apparatus membrane. The protein localises to the golgi apparatus. Its subcellular location is the trans-Golgi network membrane. It localises to the cytoplasmic vesicle. The catalysed reaction is [hyaluronan](n) + UDP-N-acetyl-alpha-D-glucosamine = N-acetyl-beta-D-glucosaminyl-(1-&gt;4)-[hyaluronan](n) + UDP + H(+). It carries out the reaction N-acetyl-beta-D-glucosaminyl-(1-&gt;4)-[hyaluronan](n) + UDP-alpha-D-glucuronate = [hyaluronan](n+1) + UDP + H(+). Its pathway is glycan biosynthesis; hyaluronan biosynthesis. Catalyzes the addition of GlcNAc or GlcUA monosaccharides to the nascent hyaluronan polymer. Therefore, it is essential to hyaluronan synthesis a major component of most extracellular matrices that has a structural role in tissues architectures and regulates cell adhesion, migration and differentiation. This is one of three isoenzymes responsible for cellular hyaluronan synthesis. The polypeptide is Hyaluronan synthase 3 (has3) (Xenopus laevis (African clawed frog)).